A 446-amino-acid polypeptide reads, in one-letter code: MGSIEIPNCSGSLVYKTISDFIEFPNHEQKLWWHSTAPMFAEMLRVAGYDLHSQYKILGIFLNHVIPFLGVYPTRINNRWLSILTRYGTPFELSLNCSQSLVRYTYEPINSATGTPKDPFNTHSIWDALDRLMPLQKGIDLEFFKHLKQDLTVDDQDSAYLLENNLVGGQIRTQNKLALDLKGGNFVLKTYIYPALKSLATGKSIKTLVFDSVYRLCRQNPSLEAPLRALEEYVDSKGPNSTASPRLLSCDLIDPSKSRVKIYILELNVTLEAMEDLWTMGGRLNDASTLAGLEMLRELWGLIKLPSGMRDYPEPFLQLGTIPDEQLPLMANYTLHHNQAMPEPQVYFTTFGLNDGRVADGLVTFFERRGWSHMAQTYKDSLRAYYPHADQETLNYLHAYISFSYRKGTPYLSVYLQSFETGDWPISNFGIPVAKPLRSNISDPDR.

L-tryptophan-binding positions include 83–84 (IL) and E92. R103, K189, and Y191 together coordinate substrate. L-tryptophan contacts are provided by Y193 and R246. The substrate site is built by R259, K261, Y263, Q345, and Y347.

The protein belongs to the tryptophan dimethylallyltransferase family. In terms of assembly, homodimer.

The enzyme catalyses L-tryptophan + dimethylallyl diphosphate = 4-(3-methylbut-2-enyl)-L-tryptophan + diphosphate. The protein operates within alkaloid biosynthesis; ergot alkaloid biosynthesis. In terms of biological role, tryptophan dimethylallyltransferase; part of the gene cluster that mediates the biosynthesis of fungal ergot alkaloid. DmaW catalyzes the first step of ergot alkaloid biosynthesis by condensing dimethylallyl diphosphate (DMAP) and tryptophan to form 4-dimethylallyl-L-tryptophan. The second step is catalyzed by the methyltransferase easF that methylates 4-dimethylallyl-L-tryptophan in the presence of S-adenosyl-L-methionine, resulting in the formation of 4-dimethylallyl-L-abrine. The catalase easC and the FAD-dependent oxidoreductase easE then transform 4-dimethylallyl-L-abrine to chanoclavine-I which is further oxidized by easD in the presence of NAD(+), resulting in the formation of chanoclavine-I aldehyde. Chanoclavine-I aldehyde is the precursor of ergoamides and ergopeptines in Clavicipitaceae, and clavine-type alcaloids such as fumiclavine in Trichocomaceae. However, the metabolites downstream of chanoclavine-I aldehyde in Arthrodermataceae have not been identified yet. In Arthroderma otae (strain ATCC MYA-4605 / CBS 113480) (Microsporum canis), this protein is Tryptophan dimethylallyltransferase.